The sequence spans 202 residues: GTP cyclohydrolase 1 (202 aa).

Zn(2+)-binding residues include Cys93, His96, and Cys164.

Belongs to the GTP cyclohydrolase I family. As to quaternary structure, toroid-shaped homodecamer, composed of two pentamers of five dimers.

The catalysed reaction is GTP + H2O = 7,8-dihydroneopterin 3'-triphosphate + formate + H(+). It functions in the pathway cofactor biosynthesis; 7,8-dihydroneopterin triphosphate biosynthesis; 7,8-dihydroneopterin triphosphate from GTP: step 1/1. This chain is GTP cyclohydrolase 1, found in Pelagibacter ubique (strain HTCC1062).